Here is a 188-residue protein sequence, read N- to C-terminus: Pyridoxal 5'-phosphate synthase subunit PdxT (188 aa).

47-49 (GES) is a binding site for L-glutamine. The active-site Nucleophile is Cys-79. L-glutamine contacts are provided by residues Arg-105 and 134 to 135 (IR). Active-site charge relay system residues include His-170 and Glu-172.

Belongs to the glutaminase PdxT/SNO family. As to quaternary structure, in the presence of PdxS, forms a dodecamer of heterodimers. Only shows activity in the heterodimer.

The enzyme catalyses aldehydo-D-ribose 5-phosphate + D-glyceraldehyde 3-phosphate + L-glutamine = pyridoxal 5'-phosphate + L-glutamate + phosphate + 3 H2O + H(+). It catalyses the reaction L-glutamine + H2O = L-glutamate + NH4(+). It functions in the pathway cofactor biosynthesis; pyridoxal 5'-phosphate biosynthesis. Functionally, catalyzes the hydrolysis of glutamine to glutamate and ammonia as part of the biosynthesis of pyridoxal 5'-phosphate. The resulting ammonia molecule is channeled to the active site of PdxS. The protein is Pyridoxal 5'-phosphate synthase subunit PdxT of Listeria monocytogenes serotype 4b (strain CLIP80459).